The primary structure comprises 237 residues: Peptidase E (237 aa).

Active-site charge relay system residues include serine 122, aspartate 137, and histidine 159.

The protein belongs to the peptidase S51 family.

The protein localises to the cytoplasm. It catalyses the reaction Dipeptidase E catalyzes the hydrolysis of dipeptides Asp-|-Xaa. It does not act on peptides with N-terminal Glu, Asn or Gln, nor does it cleave isoaspartyl peptides.. In terms of biological role, hydrolyzes dipeptides containing N-terminal aspartate residues. May play a role in allowing the cell to use peptide aspartate to spare carbon otherwise required for the synthesis of the aspartate family of amino acids. The chain is Peptidase E from Shewanella baltica (strain OS185).